Here is a 782-residue protein sequence, read N- to C-terminus: Anoctamin-9 (782 aa).

The Cytoplasmic portion of the chain corresponds to 1–198 (MQGEESLRIL…LYFVWLGWYT (198 aa)). A helical transmembrane segment spans residues 199–219 (YMLVPAALTGLLVFLSGFSLF). Over 220–264 (EASQISKEICEAHDILMCPLGDHSRRYQRLSETCTFAKLTHLFDN) the chain is Extracellular. The residue at position 250 (Ser-250) is a Phosphoserine; by PKA. The chain crosses the membrane as a helical span at residues 265-285 (DGTVVFAIFMALWATVFLEIW). Residues 286–331 (KRQRARVVLHWDLYVWDEEQEEMALQLINCPDYKLRPYQHSYLRST) lie on the Cytoplasmic side of the membrane. Residues 332–352 (VILVLTLLMICLMIGMAHVLV) traverse the membrane as a helical segment. The Extracellular segment spans residues 353–373 (VYRVLASALFSSSAVPFLEEQ). A helical membrane pass occupies residues 374-394 (VTTAVVVTGALVHYVTIIIMT). Residues 395–423 (KINRCVALKLCDFEMPRTFSERESRFTIR) lie on the Cytoplasmic side of the membrane. A helical membrane pass occupies residues 424–444 (FFTLQFFTHFSSLIYIAFILG). Over 445–552 (RINGHPGKST…EMMIQYGFTT (108 aa)) the chain is Extracellular. Residues 553-573 (IFVAAFPLAPLLALFSNLVEI) traverse the membrane as a helical segment. Residues 574–604 (RLDAIKMVWLQRRLVPRKAKDIGTWLQVLET) lie on the Cytoplasmic side of the membrane. A helical membrane pass occupies residues 605-625 (IGVLAVIANGMVIAFTSEFIP). Residues 626 to 703 (RVVYKYRYSP…QFWFLLAIRL (78 aa)) are Extracellular-facing. Residues Asn-641, Asn-652, Asn-674, and Asn-690 are each glycosylated (N-linked (GlcNAc...) asparagine). A helical membrane pass occupies residues 704–724 (AFVILFEHVALCIKLIAAWFV). Residues 725–782 (PDIPQSVKNKVLEVKYQRLREKMWHGRQRLGGVGAGSRPPMPAHPTPASIFSARSTDV) lie on the Cytoplasmic side of the membrane. The disordered stretch occupies residues 756-782 (GVGAGSRPPMPAHPTPASIFSARSTDV).

Belongs to the anoctamin family. In terms of processing, phosphorylated on serine residues by cAMP-dependent protein kinase A (PKA) which is essential for activation of its cation channel activity. Expressed in the kidney. Expressed in the olfactory epithelium.

It is found in the cell membrane. It localises to the endoplasmic reticulum. It carries out the reaction a 1,2-diacyl-sn-glycero-3-phospho-L-serine(in) = a 1,2-diacyl-sn-glycero-3-phospho-L-serine(out). The enzyme catalyses a beta-D-galactosyl-(1&lt;-&gt;1')-N-acylsphing-4-enine(out) = a beta-D-galactosyl-(1&lt;-&gt;1')-N-acylsphing-4-enine(in). The catalysed reaction is a 1,2-diacyl-sn-glycero-3-phosphocholine(in) = a 1,2-diacyl-sn-glycero-3-phosphocholine(out). It catalyses the reaction Ca(2+)(in) = Ca(2+)(out). It carries out the reaction Na(+)(in) = Na(+)(out). The enzyme catalyses K(+)(in) = K(+)(out). With respect to regulation, cation channel activity is activated via phosphorylation on serine residues by cAMP-dependent protein kinase A (PKA). PKA-activated nonselective cation channel. Discriminates poorly among cations but is more permeable to Ca(2+) ions than to monovalent cations. Acts as a calcium-activated calcium permeable channel which may operate as a endoplasmic reticulum (ER) Ca(2+)-leak channel, reducing the loading of the ER Ca(2+) store. Regulates intracellular Ca2+ signals, ion channel activity, and cytokine release in the renal tissue. Plays an important role in olfaction, amplifying cAMP-evoked cyclic nucleotide-gated (CNG) channel currents in the olfactory sensory neurons. Has calcium-dependent phospholipid scramblase activity; scrambles phosphatidylserine, phosphatidylcholine and galactosylceramide. Does not exhibit calcium-activated chloride channel (CaCC) activity. Can inhibit the activity of ANO1. In Homo sapiens (Human), this protein is Anoctamin-9 (ANO9).